We begin with the raw amino-acid sequence, 126 residues long: Protein ApaG (126 aa).

Residues 2–126 enclose the ApaG domain; sequence SDPRYQVDVS…FRLAVPGALH (125 aa).

This chain is Protein ApaG, found in Pseudomonas fluorescens (strain Pf0-1).